We begin with the raw amino-acid sequence, 366 residues long: Ribosomal RNA large subunit methyltransferase M (366 aa).

Residues S188, 221-224, D240, D260, and D277 contribute to the S-adenosyl-L-methionine site; that span reads CPGG. K306 (proton acceptor) is an active-site residue.

Belongs to the class I-like SAM-binding methyltransferase superfamily. RNA methyltransferase RlmE family. RlmM subfamily. Monomer.

It localises to the cytoplasm. It catalyses the reaction cytidine(2498) in 23S rRNA + S-adenosyl-L-methionine = 2'-O-methylcytidine(2498) in 23S rRNA + S-adenosyl-L-homocysteine + H(+). Catalyzes the 2'-O-methylation at nucleotide C2498 in 23S rRNA. In Salmonella arizonae (strain ATCC BAA-731 / CDC346-86 / RSK2980), this protein is Ribosomal RNA large subunit methyltransferase M.